The following is a 215-amino-acid chain: N-(5'-phosphoribosyl)anthranilate isomerase (215 aa).

Belongs to the TrpF family.

The enzyme catalyses N-(5-phospho-beta-D-ribosyl)anthranilate = 1-(2-carboxyphenylamino)-1-deoxy-D-ribulose 5-phosphate. It functions in the pathway amino-acid biosynthesis; L-tryptophan biosynthesis; L-tryptophan from chorismate: step 3/5. The polypeptide is N-(5'-phosphoribosyl)anthranilate isomerase (Rippkaea orientalis (strain PCC 8801 / RF-1) (Cyanothece sp. (strain PCC 8801))).